We begin with the raw amino-acid sequence, 191 residues long: GDP-mannose pyrophosphatase (191 aa).

GDP-alpha-D-mannose contacts are provided by residues tyrosine 17, lysine 38–glutamate 40, arginine 67, and alanine 85–leucine 87. Residues aspartate 43–leucine 180 form the Nudix hydrolase domain. Alanine 85, glutamate 100, and glutamate 104 together coordinate Mg(2+). The Nudix box motif lies at glycine 86–glycine 106. GDP-alpha-D-mannose contacts are provided by residues glutamate 104, glutamate 127, aspartate 150–glutamate 151, and lysine 176. Glutamate 151 provides a ligand contact to Mg(2+).

Belongs to the Nudix hydrolase family. NudK subfamily. In terms of assembly, homodimer. The cofactor is Mg(2+).

The catalysed reaction is GDP-alpha-D-mannose + H2O = alpha-D-mannose 1-phosphate + GMP + 2 H(+). Its function is as follows. Nucleoside diphosphate sugar hydrolase that hydrolyzes GDP-mannose as its preferred substrate, yielding GMP and mannose-1-phosphate. The chain is GDP-mannose pyrophosphatase (nudK) from Salmonella arizonae (strain ATCC BAA-731 / CDC346-86 / RSK2980).